A 116-amino-acid chain; its full sequence is Beta-2-microglobulin (116 aa).

Residues 1–19 form the signal peptide; that stretch reads MKFLLSFVVLAVFSASAFA. In terms of domain architecture, Ig-like C1-type spans 24 to 111; the sequence is PKIQVYSRNP…RHLKETKNIS (88 aa). C44 and C99 are oxidised to a cystine.

This sequence belongs to the beta-2-microglobulin family. Heterodimer of an alpha chain and a beta chain. Beta-2-microglobulin is the beta-chain of major histocompatibility complex class I molecules.

It is found in the secreted. In terms of biological role, component of the class I major histocompatibility complex (MHC). Involved in the presentation of peptide antigens to the immune system. The polypeptide is Beta-2-microglobulin (b2m) (Ictalurus punctatus (Channel catfish)).